A 449-amino-acid chain; its full sequence is Sensor protein QseC (449 aa).

Residues 1–12 (MKLTQRLSLRVR) are Cytoplasmic-facing. The chain crosses the membrane as a helical span at residues 13 to 33 (LTLIFLILVSITWAISSFVAW). The Periplasmic segment spans residues 34-161 (RKTTDNVDEL…REDMALAIVA (128 aa)). A helical transmembrane segment spans residues 162 to 182 (AQLTPWLIALPFMLLILLLLL). An HAMP domain is found at 183–235 (HRELRPLKKLAQALRFRSPESETPLDAKGVPSEVRPLVEALNQLFSRIHSMMV). The Cytoplasmic segment spans residues 183–449 (HRELRPLKKL…EGGFEAVVRW (267 aa)). A Histidine kinase domain is found at 243 to 449 (DAAHELRSPL…EGGFEAVVRW (207 aa)). At His-246 the chain carries Phosphohistidine; by autocatalysis.

The protein localises to the cell inner membrane. It catalyses the reaction ATP + protein L-histidine = ADP + protein N-phospho-L-histidine.. Its function is as follows. Member of a two-component regulatory system QseB/QseC. Activates the flagella regulon by activating transcription of FlhDC. May activate QseB by phosphorylation. This Salmonella typhi protein is Sensor protein QseC (qseC).